A 286-amino-acid polypeptide reads, in one-letter code: uncharacterized protein (286 aa).

The tat-type signal signal peptide spans 1 to 31 (MKKMSRRQFLKGMFGALAAGALTAGGGYGYA). A divalent metal cation-binding residues include D65, H67, D97, N130, H221, and H223.

The protein belongs to the metallophosphoesterase superfamily. Requires a divalent metal cation as cofactor. Predicted to be exported by the Tat system. The position of the signal peptide cleavage has not been experimentally proven.

This is an uncharacterized protein from Bacillus subtilis (strain 168).